Consider the following 292-residue polypeptide: Diaminopimelate epimerase (292 aa).

Positions 13, 46, and 66 each coordinate substrate. Cys75 functions as the Proton donor in the catalytic mechanism. Substrate contacts are provided by residues 76–77 (GN), Asn166, Asn199, and 217–218 (ER). The active-site Proton acceptor is Cys226. 227 to 228 (GT) is a substrate binding site.

The protein belongs to the diaminopimelate epimerase family. Homodimer.

Its subcellular location is the cytoplasm. The enzyme catalyses (2S,6S)-2,6-diaminopimelate = meso-2,6-diaminopimelate. The protein operates within amino-acid biosynthesis; L-lysine biosynthesis via DAP pathway; DL-2,6-diaminopimelate from LL-2,6-diaminopimelate: step 1/1. Functionally, catalyzes the stereoinversion of LL-2,6-diaminopimelate (L,L-DAP) to meso-diaminopimelate (meso-DAP), a precursor of L-lysine and an essential component of the bacterial peptidoglycan. This chain is Diaminopimelate epimerase, found in Ralstonia pickettii (strain 12J).